Here is a 506-residue protein sequence, read N- to C-terminus: Glycerol kinase (506 aa).

Position 11 (T11) interacts with ADP. Positions 11, 12, and 13 each coordinate ATP. Residue T11 coordinates sn-glycerol 3-phosphate. R15 provides a ligand contact to ADP. Positions 81, 82, 133, and 242 each coordinate sn-glycerol 3-phosphate. Residues R81, E82, Y133, D242, and Q243 each contribute to the glycerol site. 2 residues coordinate ADP: T264 and G316. Positions 264, 316, 320, and 421 each coordinate ATP. G421 and N425 together coordinate ADP.

It belongs to the FGGY kinase family.

It catalyses the reaction glycerol + ATP = sn-glycerol 3-phosphate + ADP + H(+). It functions in the pathway polyol metabolism; glycerol degradation via glycerol kinase pathway; sn-glycerol 3-phosphate from glycerol: step 1/1. With respect to regulation, inhibited by fructose 1,6-bisphosphate (FBP). Functionally, key enzyme in the regulation of glycerol uptake and metabolism. Catalyzes the phosphorylation of glycerol to yield sn-glycerol 3-phosphate. This chain is Glycerol kinase, found in Paracidovorax citrulli (strain AAC00-1) (Acidovorax citrulli).